The chain runs to 191 residues: Insulin-like peptide INSL6 (191 aa).

Positions 1–22 (MKQLCCSCLLWLGLLLTPFSRE) are cleaved as a signal peptide. 3 disulfide bridges follow: Cys-33/Cys-172, Cys-45/Cys-185, and Cys-171/Cys-176. Residues 53–161 (FEMEEQSPMT…RSLFWGNHSQ (109 aa)) constitute a propeptide, connecting peptide.

This sequence belongs to the insulin family.

It localises to the secreted. Functionally, may have a role in sperm development and fertilization. This is Insulin-like peptide INSL6 (Insl6) from Mus musculus (Mouse).